The primary structure comprises 490 residues: Katanin p60 ATPase-containing subunit A-like 1 (490 aa).

At Met1 the chain carries N-acetylmethionine. Residues 95-184 (DPAVWPPPVP…DGEMPKFDGA (90 aa)) are disordered. Basic and acidic residues predominate over residues 116–127 (PNREVRPLRKEM). The span at 128–139 (AGVGARGPVGRA) shows a compositional bias: low complexity. The span at 143–169 (SKSEKPSTSRDKDCRARGRDDKGRKNM) shows a compositional bias: basic and acidic residues. Ser174 carries the phosphoserine modification. 248–255 (GPPGTGKT) provides a ligand contact to ATP.

The protein belongs to the AAA ATPase family. Katanin p60 subunit A1 subfamily. A-like 1 sub-subfamily. Interacts with KATNB1 and KATNBL1.

It localises to the cytoplasm. It is found in the cytoskeleton. The protein resides in the spindle pole. Its subcellular location is the spindle. It carries out the reaction n ATP + n H2O + a microtubule = n ADP + n phosphate + (n+1) alpha/beta tubulin heterodimers.. Its function is as follows. Regulates microtubule dynamics in Sertoli cells, a process that is essential for spermiogenesis and male fertility. Severs microtubules in an ATP-dependent manner, promoting rapid reorganization of cellular microtubule arrays. Has microtubule-severing activity in vitro. This chain is Katanin p60 ATPase-containing subunit A-like 1, found in Papio anubis (Olive baboon).